The following is a 629-amino-acid chain: uncharacterized protein (629 aa).

Residue His-562 is the Proton acceptor of the active site.

It belongs to the GMC oxidoreductase family. It depends on FAD as a cofactor.

This is an uncharacterized protein from Mycobacterium tuberculosis (strain CDC 1551 / Oshkosh).